Reading from the N-terminus, the 170-residue chain is Urease accessory protein UreE (170 aa).

The segment at 144–170 is disordered; that stretch reads GGHSHDDHDHHHGHHEHDHEHHHHHHD. Residues 146–162 are compositionally biased toward basic and acidic residues; the sequence is HSHDDHDHHHGHHEHDH.

This sequence belongs to the UreE family.

It localises to the cytoplasm. Functionally, involved in urease metallocenter assembly. Binds nickel. Probably functions as a nickel donor during metallocenter assembly. In Brucella anthropi (strain ATCC 49188 / DSM 6882 / CCUG 24695 / JCM 21032 / LMG 3331 / NBRC 15819 / NCTC 12168 / Alc 37) (Ochrobactrum anthropi), this protein is Urease accessory protein UreE.